The sequence spans 92 residues: Putative membrane protein insertion efficiency factor (92 aa).

It belongs to the UPF0161 family.

Its subcellular location is the cell inner membrane. Its function is as follows. Could be involved in insertion of integral membrane proteins into the membrane. This Synechococcus sp. (strain CC9902) protein is Putative membrane protein insertion efficiency factor.